The sequence spans 63 residues: UPF0370 protein PC1_1167 (63 aa).

The chain crosses the membrane as a helical span at residues 3–23 (WLADYWWIILIILIGMLINGI). A disordered region spans residues 37–63 (NKPKLPPHRDNNDKWDDEDDDWPKKKP).

Belongs to the UPF0370 family.

It localises to the cell membrane. The chain is UPF0370 protein PC1_1167 from Pectobacterium carotovorum subsp. carotovorum (strain PC1).